Reading from the N-terminus, the 672-residue chain is Peptidoglycan D,D-transpeptidase MrdA (672 aa).

The helical transmembrane segment at 21-41 threads the bilayer; sequence IFFAVGLVIICLLVLASRYAY. Ser-326 serves as the catalytic Acyl-ester intermediate. Residues Asp-350, Asp-365, His-371, and Cys-384 each coordinate Zn(2+). Residues 616 to 672 form a disordered region; the sequence is ANHQVNGGLMTAGIKPGELPSGNESASSTPATSAPTSAAASTPQATPTRPATNEVDE. The span at 640–672 shows a compositional bias: low complexity; the sequence is SASSTPATSAPTSAAASTPQATPTRPATNEVDE.

The protein belongs to the transpeptidase family. MrdA subfamily. In terms of assembly, monomer. Zn(2+) serves as cofactor.

Its subcellular location is the cell inner membrane. It carries out the reaction Preferential cleavage: (Ac)2-L-Lys-D-Ala-|-D-Ala. Also transpeptidation of peptidyl-alanyl moieties that are N-acyl substituents of D-alanine.. It participates in cell wall biogenesis; peptidoglycan biosynthesis. Its activity is regulated as follows. Inhibited by the beta-lactams sulbactam and piperacillin-tazobactam. In terms of biological role, catalyzes cross-linking of the peptidoglycan cell wall. Involved in the determination of the rod shape of the cell. The chain is Peptidoglycan D,D-transpeptidase MrdA from Acinetobacter baumannii (strain ATCC 19606 / DSM 30007 / JCM 6841 / CCUG 19606 / CIP 70.34 / NBRC 109757 / NCIMB 12457 / NCTC 12156 / 81).